Reading from the N-terminus, the 477-residue chain is Cysteine--tRNA ligase (477 aa).

C34 lines the Zn(2+) pocket. Residues 36–46 (PTVYDFAHIGN) carry the 'HIGH' region motif. 3 residues coordinate Zn(2+): C235, H260, and E264. A 'KMSKS' region motif is present at residues 293-297 (KMSKS). K296 is an ATP binding site.

This sequence belongs to the class-I aminoacyl-tRNA synthetase family. In terms of assembly, monomer. Zn(2+) is required as a cofactor.

It localises to the cytoplasm. It carries out the reaction tRNA(Cys) + L-cysteine + ATP = L-cysteinyl-tRNA(Cys) + AMP + diphosphate. The sequence is that of Cysteine--tRNA ligase from Mesorhizobium japonicum (strain LMG 29417 / CECT 9101 / MAFF 303099) (Mesorhizobium loti (strain MAFF 303099)).